The chain runs to 306 residues: MSGGLDVLQMKEEDVLKFLAAGTHLGGTNLDFQMEQYIYKRKSDGIYIINLKRTWEKLLLAARAIVAIENPADVCVISSRNTGQRAVLKFASASGATPIAGRFTPGTFTNQIQAAFREPRLLVVTDPRADHQPLTEASYVNIPTIALCNTDSPLRYVDIAIPCNNKGAHSVGLMWWMLAREVLRMRGTISREHPWEVMPDLYFYRDPEEIEKEEQAAAEKATTKEEYQGEWTAPVAEFPQAEVADWSEGVQVPSVPIQQFPAERPEIPAAKPAAEDWSSQPASTDDWSAAPTAQASEWTGTTTEWS.

Ser-2 is modified (N-acetylserine). Laminin-binding stretches follow at residues 161–180 and 205–229; these read IPCN…MLAR and RDPE…EYQG. [DE]-W-[ST] repeat units follow at residues 230 to 232, 245 to 247, 276 to 278, 286 to 288, and 304 to 306; these read EWT, DWS, and EWS. Residues 242–306 are laminin-binding; sequence EVADWSEGVQ…EWTGTTTEWS (65 aa). Residues 261–306 form a disordered region; that stretch reads PAERPEIPAAKPAAEDWSSQPASTDDWSAAPTAQASEWTGTTTEWS. Residues 277–306 are compositionally biased toward polar residues; that stretch reads WSSQPASTDDWSAAPTAQASEWTGTTTEWS.

The protein belongs to the universal ribosomal protein uS2 family. In terms of assembly, monomer (37LRP) and homodimer (67LR). Component of the small ribosomal subunit. Mature ribosomes consist of a small (40S) and a large (60S) subunit. The 40S subunit contains about 33 different proteins and 1 molecule of RNA (18S). The 60S subunit contains about 49 different proteins and 3 molecules of RNA (28S, 5.8S and 5S). Interacts with rps21. Interacts with several laminins including at least lamb1. Interacts with mdk. Post-translationally, acylated. Acylation may be a prerequisite for conversion of the monomeric 37 kDa laminin receptor precursor (37LRP) to the mature dimeric 67 kDa laminin receptor (67LR), and may provide a mechanism for membrane association. Cleaved by stromelysin-3 (ST3) at the cell surface. Cleavage by stromelysin-3 may be a mechanism to alter cell-extracellular matrix interactions.

The protein resides in the cell membrane. It is found in the cytoplasm. Its subcellular location is the nucleus. Required for the assembly and/or stability of the 40S ribosomal subunit. Required for the processing of the 20S rRNA-precursor to mature 18S rRNA in a late step of the maturation of 40S ribosomal subunits. Also functions as a cell surface receptor for laminin. Plays a role in cell adhesion to the basement membrane and in the consequent activation of signaling transduction pathways. May play a role in cell fate determination and tissue morphogenesis. This is Small ribosomal subunit protein uS2 (rpsa) from Xenopus tropicalis (Western clawed frog).